The following is a 518-amino-acid chain: Xaa-Pro aminopeptidase 3 (518 aa).

The N-terminal 48 residues, 1-48 (MNNICKLNKFIISKSSSSLSSTSSKIKTNCLIKNAKMFSSSLNLNRFY), are a transit peptide targeting the mitochondrion. Positions 314, 345, 356, 434, 441, 461, and 485 each coordinate substrate. Residues Asp-345, Asp-356, and His-434 each contribute to the Mn(2+) site. Residues Glu-461 and Glu-485 each coordinate Mn(2+).

The protein belongs to the peptidase M24B family. Homodimer. Requires Mn(2+) as cofactor.

It is found in the mitochondrion. The protein resides in the cytoplasm. It catalyses the reaction Release of any N-terminal amino acid, including proline, that is linked to proline, even from a dipeptide or tripeptide.. In terms of biological role, catalyzes the removal of a penultimate prolyl residue from the N-termini of peptides, such as Leu-Pro-Ala. Also shows low activity towards peptides with Ala or Ser at the P1 position. The polypeptide is Xaa-Pro aminopeptidase 3 (xpnpep3) (Dictyostelium discoideum (Social amoeba)).